Reading from the N-terminus, the 452-residue chain is Na(+)/H(+) antiporter NhaA (452 aa).

The next 11 helical transmembrane spans lie at 27–47 (FLHI…TALI), 78–98 (LHFW…GMEI), 114–134 (ILPI…YLSF), 141–161 (IYGW…ILAL), 172–192 (IILL…IAFF), 201–221 (GLAI…ISFA), 222–242 (SAWL…VTGI), 316–336 (PWVA…VSFA), 346–366 (FLIV…GILA), 388–408 (ILLI…VSML), and 421–441 (IGVL…GLIY).

Belongs to the NhaA Na(+)/H(+) (TC 2.A.33) antiporter family.

Its subcellular location is the cell inner membrane. It carries out the reaction Na(+)(in) + 2 H(+)(out) = Na(+)(out) + 2 H(+)(in). In terms of biological role, na(+)/H(+) antiporter that extrudes sodium in exchange for external protons. The protein is Na(+)/H(+) antiporter NhaA of Bartonella bacilliformis (strain ATCC 35685 / KC583 / Herrer 020/F12,63).